Consider the following 221-residue polypeptide: Sugar transporter SWEET1 (221 aa).

The next 7 membrane-spanning stretches (helical) occupy residues 3–23 (AGGVADSFLSSACVLFTLGMF), 43–63 (QFLPFLTTDVNNLSWLSYGVL), 68–88 (TLIIVNSVGAVLQTLYILAYL), 102–122 (ATLLAVLLLGYGYFWLLVPDL), 129–149 (LGLFCSVFTISMYLSPLADLA), 160–180 (LSFSLTIATLFCSASWSIYGF), and 186–206 (YITVPNLPGILTSLIRLGLFC). Residues 10 to 94 (FLSSACVLFT…LAYLHYSPQK (85 aa)) form the MtN3/slv 1 domain. The MtN3/slv 2 domain maps to 127-212 (QQLGLFCSVF…GLFCKYPPEQ (86 aa)). The tract at residues 149 to 221 (AKIVQTKSTQ…QDRKYRLLQT (73 aa)) is mediates interaction with TRPV2.

This sequence belongs to the SWEET sugar transporter family. In terms of assembly, interacts with TRPV2; the interaction probably occurs intracellularly and depends on TRPV2 N-glycosylation. In terms of tissue distribution, expressed at high levels in lung, placenta, spleen and thymus, at intermediate levels in brain, heart, kidney and testis, and at low levels in bone marrow, liver and lymph node. Within the thymus expression is highest in non-lymphoid cells.

It is found in the golgi apparatus membrane. It localises to the cell membrane. Its function is as follows. Mediates sugar transport across membranes. May regulate the expression of RAG1 a gene involved in V(D)J recombination. The protein is Sugar transporter SWEET1 (Slc50a1) of Mus musculus (Mouse).